Here is a 268-residue protein sequence, read N- to C-terminus: Tryptophan synthase alpha chain (268 aa).

Active-site proton acceptor residues include glutamate 49 and aspartate 60.

It belongs to the TrpA family. Tetramer of two alpha and two beta chains.

The enzyme catalyses (1S,2R)-1-C-(indol-3-yl)glycerol 3-phosphate + L-serine = D-glyceraldehyde 3-phosphate + L-tryptophan + H2O. It functions in the pathway amino-acid biosynthesis; L-tryptophan biosynthesis; L-tryptophan from chorismate: step 5/5. In terms of biological role, the alpha subunit is responsible for the aldol cleavage of indoleglycerol phosphate to indole and glyceraldehyde 3-phosphate. The polypeptide is Tryptophan synthase alpha chain (Vibrio metschnikovii).